A 98-amino-acid chain; its full sequence is Acylphosphatase (98 aa).

The Acylphosphatase-like domain maps to 12–98 (TYYVRVRGVV…ERRFERFQQQ (87 aa)). Catalysis depends on residues Arg-27 and Asn-45.

It belongs to the acylphosphatase family.

The enzyme catalyses an acyl phosphate + H2O = a carboxylate + phosphate + H(+). This is Acylphosphatase (acyP) from Burkholderia vietnamiensis (strain G4 / LMG 22486) (Burkholderia cepacia (strain R1808)).